The following is a 515-amino-acid chain: 2-isopropylmalate synthase (515 aa).

Residues 5–267 enclose the Pyruvate carboxyltransferase domain; the sequence is VIIFDTTLRD…HTGLDHKEIH (263 aa). Residues D14, H202, H204, and N238 each contribute to the Mn(2+) site. Residues 392-515 are regulatory domain; sequence KLNYLSVQSG…EMKQQKFATV (124 aa).

Belongs to the alpha-IPM synthase/homocitrate synthase family. LeuA type 1 subfamily. In terms of assembly, homodimer. Mn(2+) is required as a cofactor.

The protein localises to the cytoplasm. The catalysed reaction is 3-methyl-2-oxobutanoate + acetyl-CoA + H2O = (2S)-2-isopropylmalate + CoA + H(+). The protein operates within amino-acid biosynthesis; L-leucine biosynthesis; L-leucine from 3-methyl-2-oxobutanoate: step 1/4. Functionally, catalyzes the condensation of the acetyl group of acetyl-CoA with 3-methyl-2-oxobutanoate (2-ketoisovalerate) to form 3-carboxy-3-hydroxy-4-methylpentanoate (2-isopropylmalate). In Vibrio atlanticus (strain LGP32) (Vibrio splendidus (strain Mel32)), this protein is 2-isopropylmalate synthase.